Reading from the N-terminus, the 160-residue chain is Cytosolic iron-sulfur assembly component 2A (160 aa).

Residues His89, His123, Glu150, and Glu153 each coordinate Zn(2+).

This sequence belongs to the MIP18 family. In terms of assembly, monomer and homodimer. Component of the CIA complex. Interacts with CIAO1. Interacts with IREB2. Interacts with APAF1.

Its subcellular location is the cytoplasm. Component of the cytosolic iron-sulfur protein assembly (CIA) complex, a multiprotein complex that mediates the incorporation of iron-sulfur cluster into extramitochondrial Fe/S proteins. As a CIA complex component and in collaboration with CIAO1 specifically matures ACO1 and stabilizes IREB2, connecting cytosolic iron-sulfur protein maturation with cellular iron regulation. May play a role in chromosome segregation through establishment of sister chromatid cohesion. May induce apoptosis in collaboration with APAF1. This Bos taurus (Bovine) protein is Cytosolic iron-sulfur assembly component 2A.